A 508-amino-acid polypeptide reads, in one-letter code: Lysine--tRNA ligase (508 aa).

Residues glutamate 418 and glutamate 425 each contribute to the Mg(2+) site.

This sequence belongs to the class-II aminoacyl-tRNA synthetase family. As to quaternary structure, homodimer. It depends on Mg(2+) as a cofactor.

Its subcellular location is the cytoplasm. The enzyme catalyses tRNA(Lys) + L-lysine + ATP = L-lysyl-tRNA(Lys) + AMP + diphosphate. The polypeptide is Lysine--tRNA ligase (Burkholderia pseudomallei (strain 1710b)).